Consider the following 63-residue polypeptide: Small, acid-soluble spore protein H 2 (63 aa).

It belongs to the SspH family.

The protein resides in the spore core. This is Small, acid-soluble spore protein H 2 from Clostridium botulinum (strain ATCC 19397 / Type A).